The primary structure comprises 164 residues: Sperm axonemal maintenance protein CFAP97D1 (164 aa).

Residues 61–88 adopt a coiled-coil conformation; it reads LSKIQGEQKRIDKIEYENRQLCQKIANA.

The protein belongs to the CFAP97 family. In terms of tissue distribution, expressed exclusively in testis.

Required for male fertility through its role in axonemal doublet stabilization which is essential for sperm motility and fertilization. In Mus musculus (Mouse), this protein is Sperm axonemal maintenance protein CFAP97D1 (Cfap97d1).